The following is a 98-amino-acid chain: NADH-ubiquinone oxidoreductase chain 4L (98 aa).

3 helical membrane-spanning segments follow: residues 1-21 (MSPI…GLLI), 30-50 (LLCL…LALT), and 61-81 (IILL…LVMV).

Belongs to the complex I subunit 4L family. Core subunit of respiratory chain NADH dehydrogenase (Complex I) which is composed of 45 different subunits.

Its subcellular location is the mitochondrion inner membrane. It carries out the reaction a ubiquinone + NADH + 5 H(+)(in) = a ubiquinol + NAD(+) + 4 H(+)(out). Functionally, core subunit of the mitochondrial membrane respiratory chain NADH dehydrogenase (Complex I) which catalyzes electron transfer from NADH through the respiratory chain, using ubiquinone as an electron acceptor. Part of the enzyme membrane arm which is embedded in the lipid bilayer and involved in proton translocation. The protein is NADH-ubiquinone oxidoreductase chain 4L (MT-ND4L) of Chrysochloris asiatica (Cape golden mole).